Here is a 1755-residue protein sequence, read N- to C-terminus: Transposon Ty1-LR3 Gag-Pol polyprotein (1755 aa).

A compositionally biased stretch (low complexity) spans 1–16; the sequence is MESQQLSQHSHISHGS. Disordered stretches follow at residues 1–93, 126–173, and 352–421; these read MESQ…MMTQ, PQSQ…RPPP, and GSRN…SKST. 2 stretches are compositionally biased toward polar residues: residues 48–60 and 127–152; these read TKAN…TPAS and QSQF…GNTF. The segment covering 153-165 has biased composition (low complexity); it reads TDSSSADSDMTST. Residues 299–401 form an RNA-binding region; it reads NNGIHINNKV…NSKSKTARAH (103 aa). Residues 402–418 show a composition bias toward low complexity; the sequence is NVSTSNNSPSTDNDSIS. Ser-416 carries the post-translational modification Phosphoserine. Asp-461 (for protease activity; shared with dimeric partner) is an active-site residue. The integrase-type zinc finger-like stretch occupies residues 583–640; the sequence is NVHTSESTRKYPYPFIHRMLAHANAQTIRYSLKNNTITYFNESDVDWSSAIDYQCPDC. The Integrase catalytic domain maps to 660–829; sequence NSYEPFQYLH…SQHAGLAGLD (170 aa). Mg(2+) is bound by residues Asp-671 and Asp-736. 3 disordered regions span residues 956 to 1087, 1092 to 1111, and 1129 to 1172; these read SKAV…ETEK, RSPS…NIVP, and ADLP…SNAY. A compositionally biased stretch (low complexity) spans 960–969; it reads SPTDSTPPST. Polar residues predominate over residues 1005 to 1015; that stretch reads STPQISNIEST. Residues 1038–1052 show a composition bias toward basic and acidic residues; it reads ESSHASKSKDFRHSD. Composition is skewed to polar residues over residues 1053-1082 and 1101-1111; these read SYSN…QISD and PENNSSHNIVP. Positions 1178-1212 match the Bipartite nuclear localization signal motif; it reads KKRSLEDNETEIKVSRDTWNTKNMRSLEPPRSKKR. A Reverse transcriptase Ty1/copia-type domain is found at 1338–1476; it reads NNYYITQLDI…DILGLEIKYQ (139 aa). Mg(2+) contacts are provided by Asp-1346, Asp-1427, Asp-1428, Asp-1610, Glu-1652, and Asp-1685. In terms of domain architecture, RNase H Ty1/copia-type spans 1610-1752; the sequence is DASYGNQPYY…IKTFKLLTNK (143 aa).

As to quaternary structure, the capsid protein forms a homotrimer, from which the VLPs are assembled. The protease is a homodimer, whose active site consists of two apposed aspartic acid residues. In terms of processing, initially, virus-like particles (VLPs) are composed of the structural unprocessed proteins Gag and Gag-Pol, and also contain the host initiator methionine tRNA (tRNA(i)-Met) which serves as a primer for minus-strand DNA synthesis, and a dimer of genomic Ty RNA. Processing of the polyproteins occurs within the particle and proceeds by an ordered pathway, called maturation. First, the protease (PR) is released by autocatalytic cleavage of the Gag-Pol polyprotein yielding capsid protein p45 and a Pol-p154 precursor protein. This cleavage is a prerequisite for subsequent processing of Pol-p154 at the remaining sites to release the mature structural and catalytic proteins. Maturation takes place prior to the RT reaction and is required to produce transposition-competent VLPs.

It is found in the cytoplasm. The protein localises to the nucleus. It catalyses the reaction DNA(n) + a 2'-deoxyribonucleoside 5'-triphosphate = DNA(n+1) + diphosphate. The catalysed reaction is Endonucleolytic cleavage to 5'-phosphomonoester.. In terms of biological role, capsid protein (CA) is the structural component of the virus-like particle (VLP), forming the shell that encapsulates the retrotransposons dimeric RNA genome. The particles are assembled from trimer-clustered units and there are holes in the capsid shells that allow for the diffusion of macromolecules. CA also has nucleocapsid-like chaperone activity, promoting primer tRNA(i)-Met annealing to the multipartite primer-binding site (PBS), dimerization of Ty1 RNA and initiation of reverse transcription. The aspartyl protease (PR) mediates the proteolytic cleavages of the Gag and Gag-Pol polyproteins after assembly of the VLP. Functionally, reverse transcriptase/ribonuclease H (RT) is a multifunctional enzyme that catalyzes the conversion of the retro-elements RNA genome into dsDNA within the VLP. The enzyme displays a DNA polymerase activity that can copy either DNA or RNA templates, and a ribonuclease H (RNase H) activity that cleaves the RNA strand of RNA-DNA heteroduplexes during plus-strand synthesis and hydrolyzes RNA primers. The conversion leads to a linear dsDNA copy of the retrotransposon that includes long terminal repeats (LTRs) at both ends. Its function is as follows. Integrase (IN) targets the VLP to the nucleus, where a subparticle preintegration complex (PIC) containing at least integrase and the newly synthesized dsDNA copy of the retrotransposon must transit the nuclear membrane. Once in the nucleus, integrase performs the integration of the dsDNA into the host genome. This is Transposon Ty1-LR3 Gag-Pol polyprotein (TY1B-LR3) from Saccharomyces cerevisiae (strain ATCC 204508 / S288c) (Baker's yeast).